The chain runs to 910 residues: Valine--tRNA ligase (910 aa).

The 'HIGH' region signature appears at proline 45–histidine 55. Residues lysine 554 to serine 558 carry the 'KMSKS' region motif. ATP is bound at residue lysine 557. Residues aspartate 842–serine 910 are a coiled coil.

It belongs to the class-I aminoacyl-tRNA synthetase family. ValS type 1 subfamily. Monomer.

The protein resides in the cytoplasm. The catalysed reaction is tRNA(Val) + L-valine + ATP = L-valyl-tRNA(Val) + AMP + diphosphate. In terms of biological role, catalyzes the attachment of valine to tRNA(Val). As ValRS can inadvertently accommodate and process structurally similar amino acids such as threonine, to avoid such errors, it has a 'posttransfer' editing activity that hydrolyzes mischarged Thr-tRNA(Val) in a tRNA-dependent manner. This Brucella melitensis biotype 1 (strain ATCC 23456 / CCUG 17765 / NCTC 10094 / 16M) protein is Valine--tRNA ligase.